Reading from the N-terminus, the 221-residue chain is uncharacterized protein (221 aa).

Residues 1–16 show a composition bias toward basic and acidic residues; it reads MESSRWDKDPPGERRP. Positions 1-64 are disordered; that stretch reads MESSRWDKDP…SHTPQTNTRR (64 aa).

This is an uncharacterized protein from Homo sapiens (Human).